The following is a 786-amino-acid chain: Rho GTPase-activating protein 10 (786 aa).

The region spanning 7–262 (EFSDCYLDSP…IRQNPKDQKR (256 aa)) is the BAR domain. One can recognise a PH domain in the interval 265-372 (QFTAEGYLYV…WLEALGGKEA (108 aa)). The 186-residue stretch at 389-574 (AQLDKMGFTI…ILIENHEKIF (186 aa)) folds into the Rho-GAP domain. Disordered regions lie at residues 584-609 (EPTCLSASPPNAPPRQSKRQGQRTKR) and 622-714 (EGDS…PFPL). Basic residues predominate over residues 599–609 (QSKRQGQRTKR). The span at 634-649 (PSSSQDSLSTPSPTTS) shows a compositional bias: low complexity. Residues 673–701 (TATTPSQTRPSMVQWLNMQSPTTPSSNPA) are compositionally biased toward polar residues. Positions 702-714 (GTPPSPRMSPFPL) are enriched in pro residues. The 59-residue stretch at 728–786 (VINRKARAVYPCEAEHSSELSFEIGAIFEDVQTSREPGWLEGTLNGKRGLIPQNYVKLL) folds into the SH3 domain.

As to quaternary structure, interacts with PKN3. Interacts with caspase-activated PAK2 proteolytic fragment PAK-2p34; the interaction does not affect ARHGAP10 GTPase activation activity towards RHOA and CDC42. Interacts via its SH3 domain with PTK2/FAK1. Interacts with PTK2B/PYK2; the interaction negatively regulates ARHGAP10 GTPase-activating activity. Interacts with MICAL1 and WDR44; complex formation might transit from GRAF2/ARHGAP10-MICAL1 to GRAF2/ARHGAP10-WDR44 complexes. Post-translationally, phosphorylated on tyrosine residues, probably involving PTK2B/PYK2. As to expression, high levels of expression in brain, testes, liver, heart and kidney.

The protein resides in the cytoplasm. Its subcellular location is the perinuclear region. It is found in the cell membrane. The protein localises to the endosome membrane. Functionally, GTPase-activating protein that catalyzes the conversion of active GTP-bound Rho GTPases to their inactive GDP-bound form, thus suppressing various Rho GTPase-mediated cellular processes. Also converts Cdc42 to an inactive GDP-bound state. Essential for PTKB2 regulation of cytoskeletal organization via Rho family GTPases. Inhibits PAK2 proteolytic fragment PAK-2p34 kinase activity and changes its localization from the nucleus to the perinuclear region. Stabilizes PAK-2p34 thereby increasing stimulation of cell death. Associates with MICAL1 on the endosomal membrane to promote Rab8-Rab10-dependent tubule extension. After dissociation with MICAL1, recruits WDR44 which connects the endoplasmic reticulum (ER) with the endosomal tubule, thereby participating in the export of a subset of neosynthesized proteins. The sequence is that of Rho GTPase-activating protein 10 (Arhgap10) from Mus musculus (Mouse).